Reading from the N-terminus, the 96-residue chain is uncharacterized protein (96 aa).

Positions 9–86 (EELKSQAQVY…NKYADTVAER (78 aa)) form a coiled coil.

This sequence belongs to the WXG100 family. sagEsxA-like subfamily.

This is an uncharacterized protein from Clostridium acetobutylicum (strain ATCC 824 / DSM 792 / JCM 1419 / IAM 19013 / LMG 5710 / NBRC 13948 / NRRL B-527 / VKM B-1787 / 2291 / W).